A 1073-amino-acid polypeptide reads, in one-letter code: MPKRTDIKSILILGAGPIVIGQACEFDYSGAQACKALREEGYRVILVNSNPATIMTDPAMADATYIEPIKWQTVAKIIEKERPDALLPTMGGQTALNCALDLEREGVLEKFGVEMIGANADTIDKAEDRSRFDKAMKSIGLACPRSGIAHSMEEANAVLEKLGFPCIIRPSFTMGGTGGGIAYNREEFEEICARGLDLSPTKELLIDESLIGWKEYEMEVVRDKKDNCIIVCSIENFDPMGVHTGDSITVAPAQTLTDKEYQILRNASLAVLREIGVETGGSNVQFGICPDTGRMVVIEMNPRVSRSSALASKATGFPIARVAAKLAVGYTLDELSNEITGGKTPASFEPSIDYVVTKLPRFAFEKFAKADARLTTQMKSVGEVMAIGRTFQESLQKALRGLEVGVCGLDPKLDLSHPESMSTLKRELTVPGAERIWYVADAFRAGMTVEEIFAMNMIDPWFLVQIEDLVKDEEKIKTLGLSAIDRDLMYRLKRKGFSDARLAKLVGVTEKNLRTHRHKLDVFPVYKRVDTCAAEFATDTAYLYSTYEEECEANPSTRDKIMILGGGPNRIGQGIEFDYCCVHAALALREDGYETIMVNCNPETVSTDYDTSDRLYFEPVTLEDVLEIVRVEKPKGVIVQYGGQTPLKLARALEAAGVPIIGTSPDAIDRAEDRERFQQMVERLNLRQPPNATVRSEDEAIRAAAKIGYPLVVRPSYVLGGRAMEIVYQEDELKRYLREAVQVSNDSPVLLDHFLNCAIEMDVDAVCDGTDVVIGAIMQHIEQAGVHSGDSACSLPPYSLPAHIQDEMREQVKKMALELGVVGLMNVQLALQGEDIYVIEVNPRASRTVPFVSKCIGVSLAMIAARVMAGKTLKELNFTKEIIPNFYSVKEAVFPFAKFPGVDPILGPEMKSTGEVMGVGDTFGEAFAKAQMGASEVLPTGGTAFISVRDDDKPLVEAVARDLINLGFEIVATAGTAKLIEAAGLKVRRVNKVTEGRPHVVDMIKNDEVTLIINTTEGRQSIADSYSIRRNALQHKIYCTTTIAAGEAICEALKFGPEKTVRRLQDLHAGLKA.

The tract at residues 1-403 (MPKRTDIKSI…SLQKALRGLE (403 aa)) is carboxyphosphate synthetic domain. ATP-binding residues include R129, R169, G175, G176, E208, L210, E215, G241, V242, H243, Q285, and E299. One can recognise an ATP-grasp 1 domain in the interval 133–328 (DKAMKSIGLA…IARVAAKLAV (196 aa)). Residues Q285, E299, and N301 each coordinate Mg(2+). Positions 285, 299, and 301 each coordinate Mn(2+). Residues 404–553 (VGVCGLDPKL…YSTYEEECEA (150 aa)) are oligomerization domain. Residues 554-935 (NPSTRDKIMI…AFAKAQMGAS (382 aa)) are carbamoyl phosphate synthetic domain. An ATP-grasp 2 domain is found at 678–869 (QQMVERLNLR…LAMIAARVMA (192 aa)). ATP-binding residues include R714, H753, L755, E760, G785, V786, H787, S788, Q828, and E840. Mg(2+)-binding residues include Q828, E840, and N842. The Mn(2+) site is built by Q828, E840, and N842. In terms of domain architecture, MGS-like spans 936–1073 (EVLPTGGTAF…LQDLHAGLKA (138 aa)). An allosteric domain region spans residues 936–1073 (EVLPTGGTAF…LQDLHAGLKA (138 aa)).

This sequence belongs to the CarB family. Composed of two chains; the small (or glutamine) chain promotes the hydrolysis of glutamine to ammonia, which is used by the large (or ammonia) chain to synthesize carbamoyl phosphate. Tetramer of heterodimers (alpha,beta)4. The cofactor is Mg(2+). Mn(2+) serves as cofactor.

The enzyme catalyses hydrogencarbonate + L-glutamine + 2 ATP + H2O = carbamoyl phosphate + L-glutamate + 2 ADP + phosphate + 2 H(+). It catalyses the reaction hydrogencarbonate + NH4(+) + 2 ATP = carbamoyl phosphate + 2 ADP + phosphate + 2 H(+). It participates in amino-acid biosynthesis; L-arginine biosynthesis; carbamoyl phosphate from bicarbonate: step 1/1. It functions in the pathway pyrimidine metabolism; UMP biosynthesis via de novo pathway; (S)-dihydroorotate from bicarbonate: step 1/3. Large subunit of the glutamine-dependent carbamoyl phosphate synthetase (CPSase). CPSase catalyzes the formation of carbamoyl phosphate from the ammonia moiety of glutamine, carbonate, and phosphate donated by ATP, constituting the first step of 2 biosynthetic pathways, one leading to arginine and/or urea and the other to pyrimidine nucleotides. The large subunit (synthetase) binds the substrates ammonia (free or transferred from glutamine from the small subunit), hydrogencarbonate and ATP and carries out an ATP-coupled ligase reaction, activating hydrogencarbonate by forming carboxy phosphate which reacts with ammonia to form carbamoyl phosphate. The sequence is that of Carbamoyl phosphate synthase large chain from Pseudomonas syringae pv. tomato (strain ATCC BAA-871 / DC3000).